The sequence spans 1019 residues: Limulus clotting factor C (1019 aa).

The signal sequence occupies residues 1–25 (MVLASFLVSGLVLGLLAQKMRPVQS). Positions 102–137 (YGTWCSGECQCKNGGICDQRTGACACRDRYEGVHCE) constitute an EGF-like domain. 17 disulfide bridges follow: cysteine 106–cysteine 118, cysteine 112–cysteine 125, cysteine 127–cysteine 136, cysteine 142–cysteine 182, cysteine 168–cysteine 195, cysteine 199–cysteine 241, cysteine 227–cysteine 254, cysteine 260–cysteine 308, cysteine 294–cysteine 321, cysteine 331–cysteine 350, cysteine 354–cysteine 374, cysteine 436–cysteine 447, cysteine 464–cysteine 564, cysteine 538–cysteine 556, cysteine 576–cysteine 621, cysteine 607–cysteine 634, and cysteine 720–cysteine 748. 3 consecutive Sushi domains span residues 140–197 (KGCP…KCIR), 198–256 (ECAM…QCKN), and 258–323 (VFCP…SCVK). Residues 325–421 (ADREVDCDSK…EELKSLARSF (97 aa)) form the LCCL domain. A C-type lectin domain is found at 436–568 (CPDGWFEVDE…PSSFACMMDL (133 aa)). Residues asparagine 523 and asparagine 534 are each glycosylated (N-linked (GlcNAc...) asparagine). Sushi domains lie at 574 to 636 (AKCD…RCIK) and 689 to 750 (PRSS…SCIP). N-linked (GlcNAc...) asparagine glycans are attached at residues asparagine 624, asparagine 740, and asparagine 767. Residues 763–1019 (IWNGNSTEIG…VFLSWIRQFI (257 aa)) enclose the Peptidase S1 domain. Cysteine 794 and cysteine 810 are joined by a disulfide. Active-site charge relay system residues include histidine 809 and aspartate 865. N-linked (GlcNAc...) asparagine glycosylation is present at asparagine 912. Cysteine 932 and cysteine 951 are disulfide-bonded. Aspartate 960 provides a ligand contact to substrate. The cysteines at positions 962 and 996 are disulfide-linked. Serine 966 acts as the Charge relay system in catalysis.

Belongs to the peptidase S1 family. As to quaternary structure, heterodimer of a light chain and a heavy chain linked by a disulfide bond.

It localises to the secreted. The catalysed reaction is Selective cleavage of 103-Arg-|-Ser-104 and 124-Ile-|-Ile-125 bonds in Limulus clotting factor B to form activated factor B. Cleavage of -Pro-Arg-|-Xaa- bonds in synthetic substrates.. Its activity is regulated as follows. Activated by Gram-negative bacterial lipopolysaccharides and chymotrypsin. This enzyme is closely associated with an endotoxin-sensitive hemolymph coagulation system which may play important roles in both hemostasis and host defense mechanisms. Its active form catalyzes the activation of factor B. This Carcinoscorpius rotundicauda (Mangrove horseshoe crab) protein is Limulus clotting factor C.